Consider the following 1004-residue polypeptide: Phyllocladan-16-alpha-ol synthase (1004 aa).

A DXDD motif motif is present at residues 321 to 324; the sequence is DADD. 6 residues coordinate Mg(2+): D667, E671, N872, D873, S876, and D880. A DEXXE motif motif is present at residues 667–671; the sequence is DEFME.

This sequence belongs to the terpene synthase family. Mg(2+) serves as cofactor.

It catalyses the reaction (2E,6E,10E)-geranylgeranyl diphosphate = (+)-copalyl diphosphate. It carries out the reaction (+)-copalyl diphosphate + H2O = phyllocladan-16alpha-ol + diphosphate. Functionally, involved in the synthesis of labdane-related hydrocarbons by catalyzing the conversion of geranylgeranyl diphosphate (GGDP) to phyllocladan-16-alpha-ol in a two step via type B cyclization into a (+)-copalyl diphosphate ((+)-CDP) intermediate. The chain is Phyllocladan-16-alpha-ol synthase (PaDC1) from Phomopsis amygdali (Fusicoccum amygdali).